The following is a 429-amino-acid chain: 3-phosphoshikimate 1-carboxyvinyltransferase (429 aa).

Residues Lys11, Ser12, and Arg16 each coordinate 3-phosphoshikimate. Residue Lys11 coordinates phosphoenolpyruvate. The phosphoenolpyruvate site is built by Gly82 and Arg110. Ser155, Gln157, Asp302, and Lys329 together coordinate 3-phosphoshikimate. Residue Gln157 coordinates phosphoenolpyruvate. Asp302 acts as the Proton acceptor in catalysis. The phosphoenolpyruvate site is built by Arg333 and Arg385.

The protein belongs to the EPSP synthase family. Monomer.

The protein localises to the cytoplasm. It catalyses the reaction 3-phosphoshikimate + phosphoenolpyruvate = 5-O-(1-carboxyvinyl)-3-phosphoshikimate + phosphate. The protein operates within metabolic intermediate biosynthesis; chorismate biosynthesis; chorismate from D-erythrose 4-phosphate and phosphoenolpyruvate: step 6/7. Functionally, catalyzes the transfer of the enolpyruvyl moiety of phosphoenolpyruvate (PEP) to the 5-hydroxyl of shikimate-3-phosphate (S3P) to produce enolpyruvyl shikimate-3-phosphate and inorganic phosphate. The protein is 3-phosphoshikimate 1-carboxyvinyltransferase of Helicobacter acinonychis (strain Sheeba).